The primary structure comprises 405 residues: Formate-dependent phosphoribosylglycinamide formyltransferase (405 aa).

Residues 27–28 (EL) and glutamate 87 contribute to the N(1)-(5-phospho-beta-D-ribosyl)glycinamide site. Residues arginine 120, lysine 162, 167-172 (SSGKGQ), 202-205 (EGFI), and glutamate 210 each bind ATP. Positions 125–320 (RLAAETLGLP…EFELHARALL (196 aa)) constitute an ATP-grasp domain. Mg(2+) is bound by residues glutamate 279 and glutamate 291. Residues aspartate 298, lysine 367, and 374–375 (RR) contribute to the N(1)-(5-phospho-beta-D-ribosyl)glycinamide site.

It belongs to the PurK/PurT family. Homodimer.

The enzyme catalyses N(1)-(5-phospho-beta-D-ribosyl)glycinamide + formate + ATP = N(2)-formyl-N(1)-(5-phospho-beta-D-ribosyl)glycinamide + ADP + phosphate + H(+). Its pathway is purine metabolism; IMP biosynthesis via de novo pathway; N(2)-formyl-N(1)-(5-phospho-D-ribosyl)glycinamide from N(1)-(5-phospho-D-ribosyl)glycinamide (formate route): step 1/1. Involved in the de novo purine biosynthesis. Catalyzes the transfer of formate to 5-phospho-ribosyl-glycinamide (GAR), producing 5-phospho-ribosyl-N-formylglycinamide (FGAR). Formate is provided by PurU via hydrolysis of 10-formyl-tetrahydrofolate. The protein is Formate-dependent phosphoribosylglycinamide formyltransferase of Bordetella avium (strain 197N).